Here is a 110-residue protein sequence, read N- to C-terminus: UPF0060 membrane protein PBPRB0495 (110 aa).

Transmembrane regions (helical) follow at residues 7–27 (VGLF…PYLW), 33–53 (TIWL…LLTL), 63–83 (AAYG…VDGI), and 85–105 (PTVW…IIMF).

It belongs to the UPF0060 family.

The protein localises to the cell inner membrane. This Photobacterium profundum (strain SS9) protein is UPF0060 membrane protein PBPRB0495.